Reading from the N-terminus, the 465-residue chain is Glutamate--tRNA ligase (465 aa).

A 'HIGH' region motif is present at residues 8-18 (PSPTGYLHIGG). Positions 236 to 240 (RLSKR) match the 'KMSKS' region motif. An ATP-binding site is contributed by K239.

Belongs to the class-I aminoacyl-tRNA synthetase family. Glutamate--tRNA ligase type 1 subfamily. Monomer.

It is found in the cytoplasm. The catalysed reaction is tRNA(Glu) + L-glutamate + ATP = L-glutamyl-tRNA(Glu) + AMP + diphosphate. Functionally, catalyzes the attachment of glutamate to tRNA(Glu) in a two-step reaction: glutamate is first activated by ATP to form Glu-AMP and then transferred to the acceptor end of tRNA(Glu). The chain is Glutamate--tRNA ligase from Nitrosospira multiformis (strain ATCC 25196 / NCIMB 11849 / C 71).